Consider the following 478-residue polypeptide: Glutamate--tRNA ligase (478 aa).

The 'HIGH' region signature appears at 9–19 (PSPTGLLHIGT). Residues 248–252 (KLSKR) carry the 'KMSKS' region motif. Lys-251 is an ATP binding site.

Belongs to the class-I aminoacyl-tRNA synthetase family. Glutamate--tRNA ligase type 1 subfamily. Monomer.

It localises to the cytoplasm. It catalyses the reaction tRNA(Glu) + L-glutamate + ATP = L-glutamyl-tRNA(Glu) + AMP + diphosphate. Functionally, catalyzes the attachment of glutamate to tRNA(Glu) in a two-step reaction: glutamate is first activated by ATP to form Glu-AMP and then transferred to the acceptor end of tRNA(Glu). In Prochlorococcus marinus subsp. pastoris (strain CCMP1986 / NIES-2087 / MED4), this protein is Glutamate--tRNA ligase.